A 289-amino-acid polypeptide reads, in one-letter code: Rhodopsin (289 aa).

At Y1–A7 the chain is on the extracellular side. Residues Y8–V32 form a helical membrane-spanning segment. Residues T33–N44 lie on the Cytoplasmic side of the membrane. The chain crosses the membrane as a helical span at residues Y45 to Y67. Topologically, residues T68 to C81 are extracellular. C81 and C158 are oxidised to a cystine. The helical transmembrane segment at N82–I104 threads the bilayer. Positions E105–W107 match the 'Ionic lock' involved in activated form stabilization motif. At E105–H123 the chain is on the cytoplasmic side. The chain crosses the membrane as a helical span at residues A124 to V144. The Extracellular portion of the chain corresponds to G145–S173. The N-linked (GlcNAc...) asparagine glycan is linked to N171. A helical membrane pass occupies residues F174–G195. Topologically, residues R196–R223 are cytoplasmic. Residues M224–W245 form a helical membrane-spanning segment. Topologically, residues I246–I257 are extracellular. The chain crosses the membrane as a helical span at residues F258–C279. The residue at position 267 (K267) is an N6-(retinylidene)lysine. Residues M280–I289 are Cytoplasmic-facing.

The protein belongs to the G-protein coupled receptor 1 family. Opsin subfamily. Post-translationally, phosphorylated on some or all of the serine and threonine residues present in the C-terminal region. In terms of processing, contains one covalently linked retinal chromophore.

Its subcellular location is the membrane. The protein resides in the cell projection. It is found in the cilium. It localises to the photoreceptor outer segment. Photoreceptor required for image-forming vision at low light intensity. While most salt water fish species use retinal as chromophore, most freshwater fish use 3-dehydroretinal, or a mixture of retinal and 3-dehydroretinal. Light-induced isomerization of 11-cis to all-trans retinal triggers a conformational change that activates signaling via G-proteins. Subsequent receptor phosphorylation mediates displacement of the bound G-protein alpha subunit by arrestin and terminates signaling. This is Rhodopsin (rho) from Abyssocottus korotneffi (Baikalian deep-water sculpin).